Here is a 645-residue protein sequence, read N- to C-terminus: Methionine--tRNA ligase (645 aa).

A 'HIGH' region motif is present at residues 13–23 (YYPSTNLHIGN). C128, C131, C145, and C148 together coordinate Zn(2+). The 'KMSKS' region signature appears at 298–302 (KMSKS). Residue K301 coordinates ATP. One can recognise a tRNA-binding domain in the interval 544–645 (DFDKIDLRVV…GEMLTGSQVR (102 aa)).

It belongs to the class-I aminoacyl-tRNA synthetase family. MetG type 2A subfamily. In terms of assembly, homodimer. It depends on Zn(2+) as a cofactor.

It is found in the cytoplasm. It carries out the reaction tRNA(Met) + L-methionine + ATP = L-methionyl-tRNA(Met) + AMP + diphosphate. In terms of biological role, is required not only for elongation of protein synthesis but also for the initiation of all mRNA translation through initiator tRNA(fMet) aminoacylation. The polypeptide is Methionine--tRNA ligase (metG) (Clostridium perfringens (strain 13 / Type A)).